The following is a 289-amino-acid chain: MSLDKRIESALVKALSPEALGESPPLLAAALPYGVFPGGARIRPTILVSVALACGDDCPAVTDAAAVALELMHCASLVHDDLPAFDNADIRRGKPSLHKAYNEPLAVLAGDSLLIRGFEVLADVGAVNPDRALKLISKLGQLSGARGGICAGQAWESESKVDLAAYHQAKTGALFIAATQMGAIAAGYEAEPWFDLGMRIGSAFQIADDLKDALMSAEAMGKPAGQDIANERPNAVKTMGIEGARKHLQDVLAGAIASIPSCPGEAKLAQMVQLYAHKIMDIPASAERG.

Isopentenyl diphosphate contacts are provided by arginine 43 and histidine 73. Residues aspartate 80 and aspartate 86 each contribute to the Mg(2+) site. Position 91 (arginine 91) interacts with (2E,6E)-farnesyl diphosphate. Residue arginine 92 participates in isopentenyl diphosphate binding. (2E,6E)-farnesyl diphosphate-binding residues include lysine 170, threonine 171, and glutamine 205.

The protein belongs to the FPP/GGPP synthase family. Requires Mg(2+) as cofactor.

The catalysed reaction is isopentenyl diphosphate + (2E,6E)-farnesyl diphosphate = (2E,6E,10E)-geranylgeranyl diphosphate + diphosphate. The protein operates within isoprenoid biosynthesis; geranylgeranyl diphosphate biosynthesis; geranylgeranyl diphosphate from farnesyl diphosphate and isopentenyl diphosphate: step 1/1. Functionally, catalyzes the condensation of farnesyl diphosphate (FPP) and isopentenyl diphosphate (IPP) to yield geranylgeranyl diphosphate (GGPP) needed for biosynthesis of carotenoids and diterpenes. In Rhodobacter capsulatus (strain ATCC BAA-309 / NBRC 16581 / SB1003), this protein is Geranylgeranyl diphosphate synthase (crtE).